Reading from the N-terminus, the 670-residue chain is Glycine--tRNA ligase beta subunit (670 aa).

It belongs to the class-II aminoacyl-tRNA synthetase family. As to quaternary structure, tetramer of two alpha and two beta subunits.

It localises to the cytoplasm. It catalyses the reaction tRNA(Gly) + glycine + ATP = glycyl-tRNA(Gly) + AMP + diphosphate. In Thermotoga neapolitana (strain ATCC 49049 / DSM 4359 / NBRC 107923 / NS-E), this protein is Glycine--tRNA ligase beta subunit.